Consider the following 631-residue polypeptide: Phosphomethylpyrimidine synthase (631 aa).

Residues asparagine 239, methionine 268, tyrosine 297, histidine 333, 353 to 355, 394 to 397, and glutamate 433 each bind substrate; these read SRG and DGLR. Zn(2+) is bound at residue histidine 437. Tyrosine 460 is a binding site for substrate. Histidine 501 provides a ligand contact to Zn(2+). [4Fe-4S] cluster-binding residues include cysteine 581, cysteine 584, and cysteine 589.

Belongs to the ThiC family. In terms of assembly, homodimer. Requires [4Fe-4S] cluster as cofactor.

It catalyses the reaction 5-amino-1-(5-phospho-beta-D-ribosyl)imidazole + S-adenosyl-L-methionine = 4-amino-2-methyl-5-(phosphooxymethyl)pyrimidine + CO + 5'-deoxyadenosine + formate + L-methionine + 3 H(+). It functions in the pathway cofactor biosynthesis; thiamine diphosphate biosynthesis. Catalyzes the synthesis of the hydroxymethylpyrimidine phosphate (HMP-P) moiety of thiamine from aminoimidazole ribotide (AIR) in a radical S-adenosyl-L-methionine (SAM)-dependent reaction. In Klebsiella pneumoniae (strain 342), this protein is Phosphomethylpyrimidine synthase.